The chain runs to 364 residues: MSSIMYHDNHLTDSGKNMSSGLSLLAYVTVMVAEEEEQRSRLLAEKREESKCKMSFFYLFPRKIKSSLAKRRYTQQNPNGASTCSSSLPDLNLIPTDFETDNLQNPCFDEPMVCDEEQRLKKGKSKIVYDEDYDDESEKKLFDNLNGASTSSSSLLNLPCLEPSTETKDVPNPNYQSSSPSSCLTGKTNRKRRAVEQRKSGKVKKVKVSPLPRLCTEMPEWIFQVMRYMNADAETPRLIFERTLFKSDVNSNLSRLLMPFQKLIRNDFLTPAECRAMQKDEDNDEEDDENIGVGTVLVNQRFQKWGLRFKIWAMEKDSGHGTLNYTLNWGWNDVVKSSSLKVGDKISLWTFRCRGVLCFALDTE.

Residues 148 to 202 (ASTSSSSLLNLPCLEPSTETKDVPNPNYQSSSPSSCLTGKTNRKRRAVEQRKSGK) form a disordered region. The TF-B3 DNA-binding region spans 260–364 (FQKLIRNDFL…GVLCFALDTE (105 aa)).

The protein localises to the nucleus. The protein is B3 domain-containing protein At5g38490 of Arabidopsis thaliana (Mouse-ear cress).